A 173-amino-acid chain; its full sequence is ATP synthase subunit b (173 aa).

A helical membrane pass occupies residues 15–35 (GVEWGTVIVQVLTFIVLLALL).

Belongs to the ATPase B chain family. In terms of assembly, F-type ATPases have 2 components, F(1) - the catalytic core - and F(0) - the membrane proton channel. F(1) has five subunits: alpha(3), beta(3), gamma(1), delta(1), epsilon(1). F(0) has three main subunits: a(1), b(2) and c(10-14). The alpha and beta chains form an alternating ring which encloses part of the gamma chain. F(1) is attached to F(0) by a central stalk formed by the gamma and epsilon chains, while a peripheral stalk is formed by the delta and b chains.

The protein localises to the cell membrane. Its function is as follows. F(1)F(0) ATP synthase produces ATP from ADP in the presence of a proton or sodium gradient. F-type ATPases consist of two structural domains, F(1) containing the extramembraneous catalytic core and F(0) containing the membrane proton channel, linked together by a central stalk and a peripheral stalk. During catalysis, ATP synthesis in the catalytic domain of F(1) is coupled via a rotary mechanism of the central stalk subunits to proton translocation. Functionally, component of the F(0) channel, it forms part of the peripheral stalk, linking F(1) to F(0). In Staphylococcus aureus (strain MSSA476), this protein is ATP synthase subunit b.